A 348-amino-acid polypeptide reads, in one-letter code: MNESSTNIPLACITAYELSFHPVYRNFQIYQLIMLFSSLFPLTYFILFQLLKSSFHGNLKSLLVGYFGAILVFSVVFLVEAFIQVLLPFISEQKCDLLIQPKYYKLGNLLGCLLMTIPTFFPISITFERLIATKMADDYEKTRVFLGPILAIFLVLLDLFLILLIYKEAIVTGGSISFVFIPASIASKMYMFFIMMLILNSFNFFFSFLLLRRNAQLKKSNSTLAAKFQLEEVYSSTKFSISVIFVHVTFFGSYTTITILLRYFGSYFFSDPIDLGAVRGAFMTMISSYNFAVGVASVYFNYIYRIKKIIEIKGNIRIVATGQAGAINYDKAIFNIWNSTSSTNNTSY.

7 consecutive transmembrane segments (helical) span residues 31–51, 63–83, 107–127, 145–165, 191–211, 241–261, and 280–300; these read QLIM…FQLL, LVGY…EAFI, GNLL…SITF, FLGP…ILLI, MFFI…FLLL, ISVI…TILL, and GAFM…SVYF.

Belongs to the nematode receptor-like protein srb family.

It localises to the membrane. In Caenorhabditis elegans, this protein is Serpentine receptor class beta-7 (srb-7).